A 304-amino-acid polypeptide reads, in one-letter code: Quorum-quenching protein AidA (304 aa).

The protein belongs to the AB hydrolase superfamily.

Functionally, involved in quorum quenching (QQ). Inhibits motility and biofilm formation. Could contribute in bacterial competition, as it is capable of hydrolyzing the signaling molecules that mediate interspecies communication. The chain is Quorum-quenching protein AidA from Acinetobacter baumannii (strain MDR-ZJ06).